Reading from the N-terminus, the 417-residue chain is CinA-like protein (417 aa).

The protein belongs to the CinA family.

This is CinA-like protein from Gloeothece citriformis (strain PCC 7424) (Cyanothece sp. (strain PCC 7424)).